The sequence spans 382 residues: Enoyl-[acyl-carrier-protein] reductase, mitochondrial (382 aa).

A mitochondrion-targeting transit peptide spans 1–17; sequence MSSFLSKRFLSFSQRAM. Tyr-77 serves as the catalytic Proton donor. Residues Asn-159, 187–190, 210–212, 285–288, 310–312, and Lys-375 each bind NADP(+); these read TSSV, RDR, YGGM, and FWV.

Belongs to the zinc-containing alcohol dehydrogenase family. Quinone oxidoreductase subfamily. In terms of assembly, homodimer.

It is found in the mitochondrion matrix. The catalysed reaction is a 2,3-saturated acyl-[ACP] + NADP(+) = a (2E)-enoyl-[ACP] + NADPH + H(+). In terms of biological role, catalyzes the NADPH-dependent reduction of trans-2-enoyl thioesters in mitochondrial fatty acid synthesis (fatty acid synthesis type II). Fatty acid chain elongation in mitochondria uses acyl carrier protein (ACP) as an acyl group carrier, but the enzyme accepts both ACP and CoA thioesters as substrates in vitro. Required for respiration and the maintenance of the mitochondrial compartment. In Kluyveromyces lactis (strain ATCC 8585 / CBS 2359 / DSM 70799 / NBRC 1267 / NRRL Y-1140 / WM37) (Yeast), this protein is Enoyl-[acyl-carrier-protein] reductase, mitochondrial (ETR1).